The sequence spans 344 residues: Centromere protein L (344 aa).

The disordered stretch occupies residues 1–32 (MAGGRPAGSAIEMEGAMRTLPSSGRPSGTGWQ). The span at 20–32 (LPSSGRPSGTGWQ) shows a compositional bias: polar residues.

It belongs to the CENP-L/IML3 family. As to quaternary structure, component of the CENPA-HI complex, at least composed of CENPH, CENPI, CENPK, CENPL, CENPM, CENPO and CENPP.

The protein localises to the nucleus. Its subcellular location is the chromosome. The protein resides in the centromere. In terms of biological role, component of the CENPA-HI complex, a centromeric complex involved in assembly of kinetochore proteins, mitotic progression and chromosome segregation. In Gallus gallus (Chicken), this protein is Centromere protein L (CENPL).